Here is a 661-residue protein sequence, read N- to C-terminus: Chermesin D/asnovolin J monooxidase nvfH (661 aa).

The N-linked (GlcNAc...) asparagine glycan is linked to Asn-12. Residues 89–111 (VLIIGAGYGGLLFAVRIIQTGAF) traverse the membrane as a helical segment. FAD-binding positions include 128–131 (TWYW), 140–141 (DV), and Tyr-146. 138–140 (MCD) serves as a coordination point for NADP(+). Residues 286-292 (TGATAIQ) and 309-310 (RT) contribute to the NADP(+) site. Residues Asn-382 and Asn-538 are each glycosylated (N-linked (GlcNAc...) asparagine).

Belongs to the FAD-binding monooxygenase family. Requires FAD as cofactor.

Its subcellular location is the membrane. It carries out the reaction chermesin D + AH2 + O2 = asnovolin I + A + H2O. It catalyses the reaction asnovolin J + AH2 + O2 = asnovolin A + A + H2O. It participates in secondary metabolite biosynthesis; terpenoid biosynthesis. Its function is as follows. Chermesin D/asnovolin J monooxidase; part of the gene cluster that mediates the biosynthesis of novofumigatonin, a heavily oxygenated meroterpenoid containing a unique orthoester moiety. The first step of the pathway is the synthesis of 3,5-dimethylorsellinic acid (DMOA) by the polyketide synthase nvfA via condensation of one acetyl-CoA starter unit with 3 malonyl-CoA units and 2 methylations. DMOA is then converted to farnesyl-DMOA by the farnesyltransferase nvfB. Epoxydation by FAD-dependent monooxygenase nvfK, followed by a protonation-initiated cyclization catalyzed by the terpene cyclase nvfL leads to the production of asnavolin H. The short chain dehydrogenase nvfC then as a 3-OH dehydrogenase of asnovolin H to yield chemesin D. There are two branches to synthesize asnovolin A from chemesin D. In one branch, chemesin D undergoes Baeyer-Villiger oxidation by nvfH, methylation by nvfJ, and enoyl reduction by the nvfM D enoylreductase that reduces the double bond between C-5'and C-6', to form respectively asnovolin I, asnovolin K, and asnovolin A. In the other branch, the methylation precedes the Baeyer-Villiger oxidation and the enoyl reduction to yield asnovolin A via the asnovolin J intermediate. Asnovolin A is further converted to fumigatonoid A by the Fe(II)/2-oxoglutarate-dependent dioxygenase nvfI that catalyzes an endoperoxidation reaction. The alpha/beta hydrolase nvfD then acts as an epimerase that converts fumigatonoid A to its C-5' epimer, which then undergoes spontaneous or nvfD-catalyzed lactonization. The following step utilizes the ketoreductase nvfG to produce fumigatonoid B. The dioxygenase nvfE further converts fumigatonoid B into fumigatonoid C. Finally the Fe(II)/2-oxoglutarate-dependent dioxygenase nvfF catalyzes two rounds of oxidation to transform fumigatonoid C into the end product, novofumigatonin A. In Aspergillus novofumigatus (strain IBT 16806), this protein is Chermesin D/asnovolin J monooxidase nvfH.